Here is a 1382-residue protein sequence, read N- to C-terminus: DNA-directed RNA polymerase subunit beta (1382 aa).

This sequence belongs to the RNA polymerase beta chain family. As to quaternary structure, the RNAP catalytic core consists of 2 alpha, 1 beta, 1 beta' and 1 omega subunit. When a sigma factor is associated with the core the holoenzyme is formed, which can initiate transcription.

It catalyses the reaction RNA(n) + a ribonucleoside 5'-triphosphate = RNA(n+1) + diphosphate. In terms of biological role, DNA-dependent RNA polymerase catalyzes the transcription of DNA into RNA using the four ribonucleoside triphosphates as substrates. This is DNA-directed RNA polymerase subunit beta from Aliarcobacter butzleri (strain RM4018) (Arcobacter butzleri).